A 31-amino-acid chain; its full sequence is TRTPVNVTVTGAAGQIGYALLFRIASGHLLG.

11–17 (GAAGQIG) serves as a coordination point for NAD(+).

Belongs to the LDH/MDH superfamily. MDH type 2 family.

The enzyme catalyses (S)-malate + NAD(+) = oxaloacetate + NADH + H(+). Its function is as follows. Catalyzes the reversible oxidation of malate to oxaloacetate. The polypeptide is Malate dehydrogenase (mdh) (Streptomyces atratus).